Here is a 313-residue protein sequence, read N- to C-terminus: MPIKLPDTLPAYDILSREGVMVMPEDGAAKQDIRPLRIGLLNLMPKKIQTETQFARLIGASPLQIELSLIRMSDHESKNTSAAHMDEFYRTFSEVQATGEKFDGLLITGAPIEHLPFEDVTYWDELIQVMDWTQTNVHSTFGICWGGMAMAYHFHGIKKHMLDAKAFGCFRHVNQAPASPYLRGFSDDVLMPVSRWTEVRSDEIAAAGLSTLIGSDDVGPALVEDADHRALYVFNHFEYDSETLKQEYDRDADAGAPINVPVNYYPGDDPTATPMNRWRSHAHLLYGNWVSELYLTTPYDIEQIGLASTDLRK.

The active-site Acyl-thioester intermediate is Cys-144. Lys-165 and Ser-194 together coordinate substrate. The active-site Proton acceptor is His-236. Residue Glu-238 is part of the active site. Residue Arg-250 coordinates substrate.

It belongs to the MetA family.

Its subcellular location is the cytoplasm. The catalysed reaction is L-homoserine + acetyl-CoA = O-acetyl-L-homoserine + CoA. It functions in the pathway amino-acid biosynthesis; L-methionine biosynthesis via de novo pathway; O-acetyl-L-homoserine from L-homoserine: step 1/1. Its function is as follows. Transfers an acetyl group from acetyl-CoA to L-homoserine, forming acetyl-L-homoserine. This is Homoserine O-acetyltransferase from Jannaschia sp. (strain CCS1).